Reading from the N-terminus, the 265-residue chain is MKIAIFNNDAKNSQMITQSLVASLEKNGLTIDNQHPDIVITVGGDGTLLGAFQHYVDQIDTIRFVGLHTGHLGFYTDWLSTELANLVSSLTHDNGQRVSYPLLDMTVVHESGEQYHFLALNEAAIKQPVGTLVADIYLGGQLFERFRGDGIAVATPTGSTAYNKANGGAVLHPKLSAIQMSEIASINNRVFRTLGSPLVVPKGEEIIVKPKSNHFLVMYDQSEIKGRHINELRFRVADKQVHFAAYRHVDFWQRVHRAFINDIES.

Asp45 functions as the Proton acceptor in the catalytic mechanism. NAD(+) is bound by residues 45-46 (DG), 121-122 (NE), Arg147, Asp149, Ala184, and Gln221.

The protein belongs to the NAD kinase family. The cofactor is a divalent metal cation.

The protein resides in the cytoplasm. The catalysed reaction is NAD(+) + ATP = ADP + NADP(+) + H(+). In terms of biological role, involved in the regulation of the intracellular balance of NAD and NADP, and is a key enzyme in the biosynthesis of NADP. Catalyzes specifically the phosphorylation on 2'-hydroxyl of the adenosine moiety of NAD to yield NADP. The polypeptide is NAD kinase (Leuconostoc citreum (strain KM20)).